Here is a 166-residue protein sequence, read N- to C-terminus: S-phase kinase-associated protein 1 homolog (166 aa).

Positions 105–166 (ILAANYLDIK…ENKWAEEATS (62 aa)) are interaction with the F-box domain of F-box proteins.

The protein belongs to the SKP1 family. Component of multiple SCF (SKP1-CUL1-F-box) E3 ubiquitin-protein ligase complexes formed of CUL1, SKP1, RBX1 and a variable F-box domain-containing protein as substrate-specific subunit.

It participates in protein modification; protein ubiquitination. Its function is as follows. Essential component of the SCF (SKP1-CUL1-F-box protein) ubiquitin ligase complex, which mediates the ubiquitination of proteins involved in cell cycle progression, signal transduction and transcription. In the SCF complex, serves as an adapter that links the F-box protein to CUL1. The functional specificity of the SCF complex depends on the F-box protein as substrate recognition component. Its association with the holoenzyme telomerase ribonucleoprotein complex suggests that it may play a role in turnover of holoenzyme telomerase complex components. The chain is S-phase kinase-associated protein 1 homolog from Tetrahymena thermophila (strain SB210).